The sequence spans 540 residues: ATP-dependent RNA helicase DBP3 (540 aa).

Over residues 1 to 35 (MTVEESKKRKLTDDVAIKQNEKKIKKDKKVKDKKD) the composition is skewed to basic and acidic residues. The tract at residues 1-89 (MTVEESKKRK…TTEQPSKQVK (89 aa)) is disordered. Basic residues predominate over residues 36 to 52 (KKDKKDKKDKKEKKEKK). Composition is skewed to basic and acidic residues over residues 53–62 (EKKEKNDKKD) and 68–79 (DKKAEQVDKLSE). The Q motif signature appears at 130-156 (LAFNQISLDKEVQNEIAKFPKPTPIQA). Residues 159 to 332 (WPYLLSGKDV…STFMKEPVKV (174 aa)) enclose the Helicase ATP-binding domain. 172–179 (AETGSGKT) is an ATP binding site. Residues 279-282 (DEAD) carry the DEAD box motif. The Helicase C-terminal domain maps to 361-510 (KLLDLLKKYQ…PVPEDLIKFG (150 aa)).

This sequence belongs to the DEAD box helicase family. DDX5/DBP2 subfamily.

It localises to the nucleus. The protein localises to the nucleolus. The enzyme catalyses ATP + H2O = ADP + phosphate + H(+). Its function is as follows. ATP-dependent RNA helicase required for 60S ribosomal subunit synthesis. Involved in efficient pre-rRNA processing, predominantly at site A3, which is necessary for the normal formation of 25S and 5.8S rRNAs. The polypeptide is ATP-dependent RNA helicase DBP3 (DBP3) (Candida glabrata (strain ATCC 2001 / BCRC 20586 / JCM 3761 / NBRC 0622 / NRRL Y-65 / CBS 138) (Yeast)).